The sequence spans 376 residues: 23S rRNA (uracil(747)-C(5))-methyltransferase RlmC (376 aa).

The [4Fe-4S] cluster site is built by Cys3, Cys11, Cys14, and Cys87. S-adenosyl-L-methionine is bound by residues Gln212, Phe241, Glu262, and Asn307. Cys334 serves as the catalytic Nucleophile.

It belongs to the class I-like SAM-binding methyltransferase superfamily. RNA M5U methyltransferase family. RlmC subfamily.

The enzyme catalyses uridine(747) in 23S rRNA + S-adenosyl-L-methionine = 5-methyluridine(747) in 23S rRNA + S-adenosyl-L-homocysteine + H(+). In terms of biological role, catalyzes the formation of 5-methyl-uridine at position 747 (m5U747) in 23S rRNA. In Pectobacterium carotovorum subsp. carotovorum (strain PC1), this protein is 23S rRNA (uracil(747)-C(5))-methyltransferase RlmC.